The chain runs to 183 residues: Large ribosomal subunit protein uL6 (183 aa).

Belongs to the universal ribosomal protein uL6 family. In terms of assembly, part of the 50S ribosomal subunit.

In terms of biological role, this protein binds to the 23S rRNA, and is important in its secondary structure. It is located near the subunit interface in the base of the L7/L12 stalk, and near the tRNA binding site of the peptidyltransferase center. This Chlamydia trachomatis serovar A (strain ATCC VR-571B / DSM 19440 / HAR-13) protein is Large ribosomal subunit protein uL6.